A 113-amino-acid polypeptide reads, in one-letter code: Hydrogenase maturation factor HybF (113 aa).

Residues His-2 and Glu-3 each contribute to the Ni(2+) site. Zn(2+) contacts are provided by Cys-73, Cys-76, Cys-89, and Cys-92.

The protein belongs to the HypA/HybF family. HybF subfamily.

Functionally, involved in the maturation of [NiFe] hydrogenases. Required for nickel insertion into the metal center of the hydrogenase. This is Hydrogenase maturation factor HybF from Escherichia coli O157:H7.